The chain runs to 262 residues: Transcription factor Spi-B (262 aa).

A TAD1 (Acidic) region spans residues 1–31 (MLALEAAQLDGPHFSCLYPDGVFYDLDSCKH). The TAD2 stretch occupies residues 41–61 (PDSLWDWTVAPPVPATPYEAF). Residues 140–163 (ALEVSDSESDEALVAGPEGKGSEA) form a disordered region. A DNA-binding region (ETS) is located at residues 169–252 (LRLYQFLLGL…VKRKLTYQFD (84 aa)).

This sequence belongs to the ETS family. In terms of assembly, can form homotypic interactions. Interacts with IRF4/Pip. Interacts with JUN. Interacts with TBP. May also interact with CREBBP and EP300. Interacts with NONO/p54(nrb). As to expression, expressed in plasmacytoid dendritic cells (pDCs) and B-cells, not expressed in T-cells or granulocytes. May also be enriched in stem cell populations of the liver.

It localises to the nucleus. It is found in the cytoplasm. Functionally, sequence specific transcriptional activator which binds to the PU-box, a purine-rich DNA sequence (5'-GAGGAA-3') that can act as a lymphoid-specific enhancer. Promotes development of plasmacytoid dendritic cells (pDCs), also known as type 2 DC precursors (pre-DC2) or natural interferon (IFN)-producing cells. These cells have the capacity to produce large amounts of interferon and block viral replication. May be required for B-cell receptor (BCR) signaling, which is necessary for normal B-cell development and antigenic stimulation. In Homo sapiens (Human), this protein is Transcription factor Spi-B (SPIB).